Here is a 361-residue protein sequence, read N- to C-terminus: Molybdopterin synthase catalytic subunit (361 aa).

Residues 101 to 102, Lys-117, and 124 to 126 contribute to the substrate site; these read HR and KKE.

It belongs to the MoaE family. MOCS2B subfamily. Heterotetramer; composed of 2 small (Mocs2A) and 2 large (Mocs2B) subunits.

Its subcellular location is the cytoplasm. It carries out the reaction 2 [molybdopterin-synthase sulfur-carrier protein]-C-terminal-Gly-aminoethanethioate + cyclic pyranopterin phosphate + H2O = molybdopterin + 2 [molybdopterin-synthase sulfur-carrier protein]-C-terminal Gly-Gly + 2 H(+). It functions in the pathway cofactor biosynthesis; molybdopterin biosynthesis. Functionally, catalytic subunit of the molybdopterin synthase complex, a complex that catalyzes the conversion of precursor Z into molybdopterin. Acts by mediating the incorporation of 2 sulfur atoms from thiocarboxylated Mocs2A into precursor Z to generate a dithiolene group. The protein is Molybdopterin synthase catalytic subunit of Drosophila persimilis (Fruit fly).